A 61-amino-acid chain; its full sequence is uncharacterized protein (61 aa).

The Extracellular segment spans residues Met1–Val20. A helical transmembrane segment spans residues Leu21–Ile41. Topologically, residues Thr42 to Ser61 are cytoplasmic.

It is found in the host membrane. This is an uncharacterized protein from Acidianus filamentous virus 2 (isolate Italy/Pozzuoli) (AFV-2).